A 423-amino-acid polypeptide reads, in one-letter code: Serine--tRNA ligase (423 aa).

231-233 contributes to the L-serine binding site; the sequence is TAE. Residue 262 to 264 coordinates ATP; that stretch reads RSE. Position 285 (Glu285) interacts with L-serine. 349 to 352 is a binding site for ATP; sequence EISS. L-serine is bound at residue Ser384.

Belongs to the class-II aminoacyl-tRNA synthetase family. Type-1 seryl-tRNA synthetase subfamily. As to quaternary structure, homodimer. The tRNA molecule binds across the dimer.

Its subcellular location is the cytoplasm. The catalysed reaction is tRNA(Ser) + L-serine + ATP = L-seryl-tRNA(Ser) + AMP + diphosphate + H(+). The enzyme catalyses tRNA(Sec) + L-serine + ATP = L-seryl-tRNA(Sec) + AMP + diphosphate + H(+). Its pathway is aminoacyl-tRNA biosynthesis; selenocysteinyl-tRNA(Sec) biosynthesis; L-seryl-tRNA(Sec) from L-serine and tRNA(Sec): step 1/1. Catalyzes the attachment of serine to tRNA(Ser). Is also able to aminoacylate tRNA(Sec) with serine, to form the misacylated tRNA L-seryl-tRNA(Sec), which will be further converted into selenocysteinyl-tRNA(Sec). The chain is Serine--tRNA ligase from Lactococcus lactis subsp. cremoris (strain SK11).